Here is a 318-residue protein sequence, read N- to C-terminus: Ribosomal RNA small subunit methyltransferase H (318 aa).

S-adenosyl-L-methionine is bound by residues 35–37 (AGH), D55, F84, D105, and Q112. The interval 294-318 (SDSELSENNRSRSAKLRIAEKIKSR) is disordered.

It belongs to the methyltransferase superfamily. RsmH family.

The protein resides in the cytoplasm. It carries out the reaction cytidine(1402) in 16S rRNA + S-adenosyl-L-methionine = N(4)-methylcytidine(1402) in 16S rRNA + S-adenosyl-L-homocysteine + H(+). Its function is as follows. Specifically methylates the N4 position of cytidine in position 1402 (C1402) of 16S rRNA. This Enterococcus faecalis (strain ATCC 700802 / V583) protein is Ribosomal RNA small subunit methyltransferase H.